The following is a 203-amino-acid chain: uncharacterized protein (203 aa).

The segment at 174–203 (LASSKNPRARSPGLDPLGSSETLWSHRGGH) is disordered.

This is an uncharacterized protein from Homo sapiens (Human).